The following is a 518-amino-acid chain: MDVIGRQHLRQMWDDLAEVYDKKTALIFESAQGKVRQFSYSELNEEINRAANLFHACGIKKGDHVALHLDNCPEFFFCWFGLAKIGAVMVPINARFMYEESAWIINHCQAHFVVTSDNFSPIYQPMLHDKHSPLTQLFLITENCLPTEQGVVDFLSEKAKHPVTLNHHTPLSVDDTAEILFTSGTTSQPKGVVITHYNLRFAGYYSSWQNALREDDIYLTVMPAFHIDCQCTASLPAFSVGATFVLLEKYSARAFWKQILKYQATVTECIPMMMRTLMAQPVSPDEKQHKLREVMFYLNLADEEKDAFIERFNVRLLTSYGMTETIVGLIGDRPGDKRRWPSIGRPGFCYQAQIRDKQNQQVPNGVVGEICVKGEPGKTLFKEYYNRPDATEKALEPDGWLHTGDYGYQDDEGFFYFVDRSCNMIKRGGENVSCIEIENIIASHPKIQDVAVIGVPDDIRDEAIKAFVVLVDGETLSEEAFFAFCEQNMAKFKVPSAVEFKQGLPRNCSGKVIKKHLQ.

The protein belongs to the ATP-dependent AMP-binding enzyme family.

It carries out the reaction 4-(trimethylamino)butanoate + ATP + CoA = 4-(trimethylamino)butanoyl-CoA + AMP + diphosphate. The enzyme catalyses crotonobetaine + ATP + CoA = crotonobetainyl-CoA + AMP + diphosphate. The catalysed reaction is (R)-carnitine + ATP + CoA = (R)-carnitinyl-CoA + AMP + diphosphate. It participates in amine and polyamine metabolism; carnitine metabolism. Catalyzes the transfer of CoA to carnitine, generating the initial carnitinyl-CoA needed for the CaiB reaction cycle. Also has activity toward crotonobetaine and gamma-butyrobetaine. This chain is Crotonobetaine/carnitine--CoA ligase, found in Proteus mirabilis (strain HI4320).